We begin with the raw amino-acid sequence, 433 residues long: Leucine-rich repeat extensin-like protein 7 (433 aa).

An N-terminal signal peptide occupies residues 1 to 21; the sequence is MRIYQPTLLIFTTVVLLSISA. N-linked (GlcNAc...) asparagine glycosylation is present at asparagine 71. LRR repeat units lie at residues 98 to 122, 123 to 145, 146 to 170, 171 to 194, 196 to 217, 219 to 239, 241 to 265, 266 to 289, and 290 to 313; these read VKTVSGVDLNQGDIAGHLPEELGLL, TDIALFHVNSNRFCGTLPVGFSQ, LSLLFELDLSNNRFAGKFPEVVIGL, PKLKYLDLRYNEFEGELPESLFDK, LDALFLNSNRFRSKIPVNMGNS, VSVLVLASNRFEGCIPPSFGK, GKTLNEIILMDNGLQSCIPNDMGLL, QNVTVLDISYNWLVGELPKSMGQM, and ENLEVLNVERNMLSGLIPDELCSL. An N-linked (GlcNAc...) asparagine glycan is attached at asparagine 267. Asparagine 340 is a glycosylation site (N-linked (GlcNAc...) asparagine). The tract at residues 380–433 is disordered; sequence FSPPPSQISPSSQPLAPAPSPTSPPLSTPPPARPCPPVYSPPPPPPLSLAPSMN. A contains the Ser-Pro(4) repeats region spans residues 381–433; it reads SPPPSQISPSSQPLAPAPSPTSPPLSTPPPARPCPPVYSPPPPPPLSLAPSMN. The span at 395–427 shows a compositional bias: pro residues; the sequence is APAPSPTSPPLSTPPPARPCPPVYSPPPPPPLS.

Hydroxylated on proline residues in the S-P-P-P-P repeat. Post-translationally, O-glycosylated on hydroxyprolines. Expressed in flowers and pollen.

It is found in the secreted. The protein resides in the cell wall. Functionally, modulates cell morphogenesis by regulating cell wall formation and assembly, and/or growth polarization. This chain is Leucine-rich repeat extensin-like protein 7 (LRX7), found in Arabidopsis thaliana (Mouse-ear cress).